The sequence spans 210 residues: Uridine kinase P10 (210 aa).

10–18 (GISGSGKST) contacts ATP. Asp41 is an active-site residue.

This sequence belongs to the uridine kinase family. In terms of assembly, interacts with host eIF-2B; this interaction disrupts the interaction between eIF2 and eIF-2B, which leads to the inhibition of stress granules formation.

Its subcellular location is the host cytoplasm. It is found in the host perinuclear region. The enzyme catalyses uridine + ATP = UMP + ADP + H(+). Inhibits the integrated stress response (ISR) in the infected cell by preventing the sequestration of eIF2B by phosphorylated EIF2S1/eIF-2alpha. Stress granule formation in response to EIF2S1/eIF-2alpha phosphorylation is thus inhibited, which allows protein synthesis and viral replication. Phosphorylates uridine to uridine monophosphate. The protein is Uridine kinase P10 (ORF10) of Beluga whale coronavirus (strain SW1) (BwCoV).